The sequence spans 256 residues: Glycerol-3-phosphate acyltransferase (256 aa).

6 consecutive transmembrane segments (helical) span residues Phe-2–Trp-22, Leu-58–Leu-78, Ser-90–Phe-110, Leu-123–Phe-143, Ile-153–Gly-173, and Phe-211–Val-231.

This sequence belongs to the PlsY family. As to quaternary structure, probably interacts with PlsX.

It localises to the cell membrane. It carries out the reaction an acyl phosphate + sn-glycerol 3-phosphate = a 1-acyl-sn-glycero-3-phosphate + phosphate. The protein operates within lipid metabolism; phospholipid metabolism. In terms of biological role, catalyzes the transfer of an acyl group from acyl-phosphate (acyl-PO(4)) to glycerol-3-phosphate (G3P) to form lysophosphatidic acid (LPA). This enzyme utilizes acyl-phosphate as fatty acyl donor, but not acyl-CoA or acyl-ACP. This Mesoplasma florum (strain ATCC 33453 / NBRC 100688 / NCTC 11704 / L1) (Acholeplasma florum) protein is Glycerol-3-phosphate acyltransferase.